A 384-amino-acid chain; its full sequence is tRNA-specific 2-thiouridylase MnmA (384 aa).

ATP contacts are provided by residues 21-28 (GMSGGVDS) and Met47. An interaction with target base in tRNA region spans residues 107 to 109 (NPD). Cys112 functions as the Nucleophile in the catalytic mechanism. Cys112 and Cys208 are joined by a disulfide. Position 136 (Gly136) interacts with ATP. The tract at residues 158–160 (KDQ) is interaction with tRNA. Cys208 acts as the Cysteine persulfide intermediate in catalysis. The interval 320-321 (RY) is interaction with tRNA.

This sequence belongs to the MnmA/TRMU family.

It localises to the cytoplasm. The enzyme catalyses S-sulfanyl-L-cysteinyl-[protein] + uridine(34) in tRNA + AH2 + ATP = 2-thiouridine(34) in tRNA + L-cysteinyl-[protein] + A + AMP + diphosphate + H(+). Functionally, catalyzes the 2-thiolation of uridine at the wobble position (U34) of tRNA, leading to the formation of s(2)U34. This chain is tRNA-specific 2-thiouridylase MnmA, found in Chromohalobacter salexigens (strain ATCC BAA-138 / DSM 3043 / CIP 106854 / NCIMB 13768 / 1H11).